The following is a 329-amino-acid chain: Phenylalanine--tRNA ligase alpha subunit (329 aa).

Belongs to the class-II aminoacyl-tRNA synthetase family. Phe-tRNA synthetase alpha subunit type 1 subfamily. As to quaternary structure, tetramer of two alpha and two beta subunits. Mg(2+) serves as cofactor.

The protein localises to the cytoplasm. It carries out the reaction tRNA(Phe) + L-phenylalanine + ATP = L-phenylalanyl-tRNA(Phe) + AMP + diphosphate + H(+). The sequence is that of Phenylalanine--tRNA ligase alpha subunit (pheS) from Buchnera aphidicola subsp. Acyrthosiphon pisum (strain APS) (Acyrthosiphon pisum symbiotic bacterium).